Reading from the N-terminus, the 465-residue chain is ATP synthase subunit beta (465 aa).

152–159 (GGAGVGKT) is a binding site for ATP.

It belongs to the ATPase alpha/beta chains family. F-type ATPases have 2 components, CF(1) - the catalytic core - and CF(0) - the membrane proton channel. CF(1) has five subunits: alpha(3), beta(3), gamma(1), delta(1), epsilon(1). CF(0) has three main subunits: a(1), b(2) and c(9-12). The alpha and beta chains form an alternating ring which encloses part of the gamma chain. CF(1) is attached to CF(0) by a central stalk formed by the gamma and epsilon chains, while a peripheral stalk is formed by the delta and b chains.

It is found in the cell inner membrane. The catalysed reaction is ATP + H2O + 4 H(+)(in) = ADP + phosphate + 5 H(+)(out). In terms of biological role, produces ATP from ADP in the presence of a proton gradient across the membrane. The catalytic sites are hosted primarily by the beta subunits. This chain is ATP synthase subunit beta, found in Campylobacter concisus (strain 13826).